Here is a 452-residue protein sequence, read N- to C-terminus: Probable alpha-galactosidase B (452 aa).

The first 24 residues, 1 to 24 (MLHRATTTAAAAAAAALLLCPVQA), serve as a signal peptide directing secretion. The cysteines at positions 47 and 79 are disulfide-linked. N-linked (GlcNAc...) asparagine glycosylation is found at N87 and N138. Cysteines 129 and 159 form a disulfide. Catalysis depends on D157, which acts as the Nucleophile. An N-linked (GlcNAc...) asparagine glycan is attached at N184. 231 to 235 (DWGQA) lines the substrate pocket. D253 (proton donor) is an active-site residue. 4 N-linked (GlcNAc...) asparagine glycosylation sites follow: N292, N391, N409, and N410.

It belongs to the glycosyl hydrolase 27 family.

It is found in the secreted. It catalyses the reaction Hydrolysis of terminal, non-reducing alpha-D-galactose residues in alpha-D-galactosides, including galactose oligosaccharides, galactomannans and galactolipids.. Hydrolyzes a variety of simple alpha-D-galactoside as well as more complex molecules such as oligosaccharides and polysaccharides. The polypeptide is Probable alpha-galactosidase B (Talaromyces emersonii (Thermophilic fungus)).